A 101-amino-acid polypeptide reads, in one-letter code: Protein Tat (101 aa).

Residues 1–20 are disordered; the sequence is MEVVDPNLDPWKHPGSQPET. The tract at residues 1 to 24 is interaction with human CREBBP; the sequence is MEVVDPNLDPWKHPGSQPETPCNK. The tract at residues 1-48 is transactivation; sequence MEVVDPNLDPWKHPGSQPETPCNKCYCKKCCFHCQLCFTRKGLGISYG. Zn(2+) contacts are provided by Cys-22, Cys-25, and Cys-27. Positions 22–37 are cysteine-rich; it reads CNKCYCKKCCFHCQLC. At Lys-28 the chain carries N6-acetyllysine; by host PCAF. Residues Cys-30, His-33, Cys-34, and Cys-37 each coordinate Zn(2+). A core region spans residues 38–48; it reads FTRKGLGISYG. Residues 47–101 are disordered; the sequence is YGRKKRRQRRRTPQSGEVHQDPVSKQPLSQTRGDPKGPEESKKKVESKTKTDPSD. Basic residues predominate over residues 48–58; it reads GRKKRRQRRRT. The Nuclear localization signal, RNA-binding (TAR), and protein transduction motif lies at 49 to 57; it reads RKKRRQRRR. Residues 49–86 are interaction with the host capping enzyme RNGTT; that stretch reads RKKRRQRRRTPQSGEVHQDPVSKQPLSQTRGDPKGPEE. N6-acetyllysine; by host EP300 and GCN5L2 is present on residues Lys-50 and Lys-51. Asymmetric dimethylarginine; by host PRMT6 occurs at positions 52 and 53. Residue Lys-71 forms a Glycyl lysine isopeptide (Lys-Gly) (interchain with G-Cter in ubiquitin) linkage. A Cell attachment site motif is present at residues 78-80; the sequence is RGD. The segment covering 79–101 has biased composition (basic and acidic residues); it reads GDPKGPEESKKKVESKTKTDPSD.

This sequence belongs to the lentiviruses Tat family. As to quaternary structure, interacts with host CCNT1. Associates with the P-TEFb complex composed at least of Tat, P-TEFb (CDK9 and CCNT1), TAR RNA, RNA Pol II. Recruits the HATs CREBBP, TAF1/TFIID, EP300, PCAF and GCN5L2. Interacts with host KAT5/Tip60; this interaction targets the latter to degradation. Interacts with the host deacetylase SIRT1. Interacts with host capping enzyme RNGTT; this interaction stimulates RNGTT. Binds to host KDR, and to the host integrins ITGAV/ITGB3 and ITGA5/ITGB1. Interacts with host KPNB1/importin beta-1 without previous binding to KPNA1/importin alpha-1. Interacts with EIF2AK2. Interacts with host nucleosome assembly protein NAP1L1; this interaction may be required for the transport of Tat within the nucleus, since the two proteins interact at the nuclear rim. Interacts with host C1QBP/SF2P32; this interaction involves lysine-acetylated Tat. Interacts with the host chemokine receptors CCR2, CCR3 and CXCR4. Interacts with host DPP4/CD26; this interaction may trigger an anti-proliferative effect. Interacts with host LDLR. Interacts with the host extracellular matrix metalloproteinase MMP1. Interacts with host PRMT6; this interaction mediates Tat's methylation. Interacts with, and is ubiquitinated by MDM2/Hdm2. Interacts with host PSMC3 and HTATIP2. Interacts with STAB1; this interaction may overcome SATB1-mediated repression of IL2 and IL2RA (interleukin) in T cells by binding to the same domain than HDAC1. Interacts (when acetylated) with human CDK13, thereby increasing HIV-1 mRNA splicing and promoting the production of the doubly spliced HIV-1 protein Nef. Interacts with host TBP; this interaction modulates the activity of transcriptional pre-initiation complex. Interacts with host RELA. Interacts with host PLSCR1; this interaction negatively regulates Tat transactivation activity by altering its subcellular distribution. Asymmetrical arginine methylation by host PRMT6 seems to diminish the transactivation capacity of Tat and affects the interaction with host CCNT1. Post-translationally, acetylation by EP300, CREBBP, GCN5L2/GCN5 and PCAF regulates the transactivation activity of Tat. EP300-mediated acetylation of Lys-50 promotes dissociation of Tat from the TAR RNA through the competitive binding to PCAF's bromodomain. In addition, the non-acetylated Tat's N-terminus can also interact with PCAF. PCAF-mediated acetylation of Lys-28 enhances Tat's binding to CCNT1. Lys-50 is deacetylated by SIRT1. In terms of processing, polyubiquitination by host MDM2 does not target Tat to degradation, but activates its transactivation function and fosters interaction with CCNT1 and TAR RNA. Phosphorylated by EIF2AK2 on serine and threonine residues adjacent to the basic region important for TAR RNA binding and function. Phosphorylation of Tat by EIF2AK2 is dependent on the prior activation of EIF2AK2 by dsRNA.

Its subcellular location is the host nucleus. The protein localises to the host nucleolus. It localises to the host cytoplasm. The protein resides in the secreted. Functionally, transcriptional activator that increases RNA Pol II processivity, thereby increasing the level of full-length viral transcripts. Recognizes a hairpin structure at the 5'-LTR of the nascent viral mRNAs referred to as the transactivation responsive RNA element (TAR) and recruits the cyclin T1-CDK9 complex (P-TEFb complex) that will in turn hyperphosphorylate the RNA polymerase II to allow efficient elongation. The CDK9 component of P-TEFb and other Tat-activated kinases hyperphosphorylate the C-terminus of RNA Pol II that becomes stabilized and much more processive. Other factors such as HTATSF1/Tat-SF1, SUPT5H/SPT5, and HTATIP2 are also important for Tat's function. Besides its effect on RNA Pol II processivity, Tat induces chromatin remodeling of proviral genes by recruiting the histone acetyltransferases (HATs) CREBBP, EP300 and PCAF to the chromatin. This also contributes to the increase in proviral transcription rate, especially when the provirus integrates in transcriptionally silent region of the host genome. To ensure maximal activation of the LTR, Tat mediates nuclear translocation of NF-kappa-B by interacting with host RELA. Through its interaction with host TBP, Tat may also modulate transcription initiation. Tat can reactivate a latently infected cell by penetrating in it and transactivating its LTR promoter. In the cytoplasm, Tat is thought to act as a translational activator of HIV-1 mRNAs. Its function is as follows. Extracellular circulating Tat can be endocytosed by surrounding uninfected cells via the binding to several surface receptors such as CD26, CXCR4, heparan sulfate proteoglycans (HSPG) or LDLR. Neurons are rarely infected, but they internalize Tat via their LDLR. Through its interaction with nuclear HATs, Tat is potentially able to control the acetylation-dependent cellular gene expression. Modulates the expression of many cellular genes involved in cell survival, proliferation or in coding for cytokines or cytokine receptors. Tat plays a role in T-cell and neurons apoptosis. Tat induced neurotoxicity and apoptosis probably contribute to neuroAIDS. Circulating Tat also acts as a chemokine-like and/or growth factor-like molecule that binds to specific receptors on the surface of the cells, affecting many cellular pathways. In the vascular system, Tat binds to ITGAV/ITGB3 and ITGA5/ITGB1 integrins dimers at the surface of endothelial cells and competes with bFGF for heparin-binding sites, leading to an excess of soluble bFGF. This Homo sapiens (Human) protein is Protein Tat.